The primary structure comprises 1183 residues: DNA-directed RNA polymerase subunit beta (1183 aa).

Acidic residues predominate over residues Asp-1149–Ala-1162. Residues Asp-1149–Asp-1183 are disordered. Positions Thr-1163–Asp-1183 are enriched in basic and acidic residues.

The protein belongs to the RNA polymerase beta chain family. As to quaternary structure, the RNAP catalytic core consists of 2 alpha, 1 beta, 1 beta' and 1 omega subunit. When a sigma factor is associated with the core the holoenzyme is formed, which can initiate transcription.

The catalysed reaction is RNA(n) + a ribonucleoside 5'-triphosphate = RNA(n+1) + diphosphate. In terms of biological role, DNA-dependent RNA polymerase catalyzes the transcription of DNA into RNA using the four ribonucleoside triphosphates as substrates. This chain is DNA-directed RNA polymerase subunit beta, found in Staphylococcus haemolyticus (strain JCSC1435).